We begin with the raw amino-acid sequence, 605 residues long: Elongation factor 4 (605 aa).

The tr-type G domain occupies 11–193 (KNIRNFSIIA…TLVDVIPAPT (183 aa)). Residues 23 to 28 (DHGKST) and 140 to 143 (NKID) contribute to the GTP site.

Belongs to the TRAFAC class translation factor GTPase superfamily. Classic translation factor GTPase family. LepA subfamily.

It localises to the cell inner membrane. It catalyses the reaction GTP + H2O = GDP + phosphate + H(+). In terms of biological role, required for accurate and efficient protein synthesis under certain stress conditions. May act as a fidelity factor of the translation reaction, by catalyzing a one-codon backward translocation of tRNAs on improperly translocated ribosomes. Back-translocation proceeds from a post-translocation (POST) complex to a pre-translocation (PRE) complex, thus giving elongation factor G a second chance to translocate the tRNAs correctly. Binds to ribosomes in a GTP-dependent manner. The protein is Elongation factor 4 of Acinetobacter baumannii (strain AB307-0294).